The chain runs to 144 residues: Catabolic 3-dehydroquinase 1 (144 aa).

Y24 functions as the Proton acceptor in the catalytic mechanism. Residues N75, H81, and D88 each coordinate substrate. H101 (proton donor) is an active-site residue. Substrate is bound by residues 102 to 103 (IS) and R112.

It belongs to the type-II 3-dehydroquinase family. As to quaternary structure, homododecamer. Adopts a ring-like structure, composed of an arrangement of two hexameric rings stacked on top of one another.

The enzyme catalyses 3-dehydroquinate = 3-dehydroshikimate + H2O. The protein operates within aromatic compound metabolism; 3,4-dihydroxybenzoate biosynthesis; 3,4-dihydroxybenzoate from 3-dehydroquinate: step 1/2. Is involved in the catabolism of quinate. Allows the utilization of quinate as carbon source via the beta-ketoadipate pathway. This chain is Catabolic 3-dehydroquinase 1, found in Fusarium vanettenii (strain ATCC MYA-4622 / CBS 123669 / FGSC 9596 / NRRL 45880 / 77-13-4) (Fusarium solani subsp. pisi).